The sequence spans 956 residues: Replication factor C subunit 1 (956 aa).

Composition is skewed to basic and acidic residues over residues 1 to 15 (MSDI…HEKG) and 50 to 74 (TADR…KEVE). 2 disordered regions span residues 1–206 (MSDI…TPDC) and 286–332 (KKSL…AKGK). The segment covering 158 to 183 (RGRGGRAAPGASTGGRGRGGGRGGFM) has biased composition (gly residues). Composition is skewed to basic and acidic residues over residues 186–200 (GERK…KEVP) and 288–298 (SLPERSNKGTE). The region spanning 202-292 (GTPDCLAGLT…KPVKKSLPER (91 aa)) is the BRCT domain. An ATP-binding site is contributed by 399–406 (SGTPGIGK). The disordered stretch occupies residues 858-956 (LEPTVDSLRD…GRGSGAKRKR (99 aa)). Over residues 866–892 (RDEDGEPLADNEEGNGSDAEEDSEEAT) the composition is skewed to acidic residues. The segment covering 916 to 925 (KGAGSSGSRK) has biased composition (low complexity).

The protein belongs to the activator 1 large subunit family. Heterotetramer of subunits RFC2, RFC3, RFC4 and RFC5 that can form a complex with RFC1. Expressed at high levels in flowers and siliques, and at lower levels in roots, stems and leaves.

It is found in the nucleus. Its function is as follows. Plays a role as mediator of transcriptional gene silencing (TGS), DNA replication, DNA repair, hypersensitive response (HR) and telomere length regulation. Is required in meiosis for DNA double-strand break (DSB) repair during meiotic homologous recombination. May participate in the RAD51-mediated recombination intermediate repair process. Is important for lagging strand synthesis. Promotes meiotic recombination via a specific pathway for crossovers (COs) that involves the formation of double Holliday Junction (dHJ) intermediates. In Arabidopsis thaliana (Mouse-ear cress), this protein is Replication factor C subunit 1 (RFC1).